Consider the following 262-residue polypeptide: T-cell surface glycoprotein YE1/48 (262 aa).

The Cytoplasmic segment spans residues 1–44 (MSEQEVTYSMVRFHKSAGLQKQVRPEETKGPREAGYRRCSFHWK). A helical; Signal-anchor for type II membrane protein membrane pass occupies residues 45 to 66 (FIVIALGIFCFLLLVAVSVLAI). Residues 67–262 (KIFQYDQQKN…CGKRLDKFPH (196 aa)) lie on the Extracellular side of the membrane. Residues N86, N103, and N123 are each glycosylated (N-linked (GlcNAc...) asparagine). The Cell attachment site motif lies at 137-139 (RGD). Residues 138 to 257 (GDKVYWFCYG…VFICICGKRL (120 aa)) form the C-type lectin domain. 4 disulfides stabilise this stretch: C145/C150, C163/C251, C167/C253, and C232/C245.

As to quaternary structure, homodimer; disulfide-linked. As to expression, high, in T-lymphoma lines, very low in normal lymphocytes.

It is found in the membrane. Its function is as follows. Receptor on natural killer (NK) cells for H-2d alleles. Inhibits the activity of NK cells thus preventing cell lysis. The sequence is that of T-cell surface glycoprotein YE1/48 (Klra1) from Mus musculus (Mouse).